The sequence spans 410 residues: Protein king tubby 1 (410 aa).

Disordered regions lie at residues 44 to 109 (QFMM…STRH) and 121 to 159 (ISPA…EGDV). The segment covering 47–72 (MSPNNPDQILTSTGNASVTTTPTSPY) has biased composition (polar residues). Residues 132–143 (SHHDSSSGKSVE) are compositionally biased toward basic and acidic residues.

This sequence belongs to the TUB family.

It localises to the cytoplasm. The protein resides in the nucleus. The polypeptide is Protein king tubby 1 (king-tubby1) (Aedes aegypti (Yellowfever mosquito)).